The chain runs to 264 residues: Ferric siderophore reductase (264 aa).

In terms of domain architecture, FAD-binding FR-type spans 9-127 (SPTRLTYISD…PGPLKMNRFD (119 aa)). FAD contacts are provided by R73, S74, T76, D90, V92, H96, A100, T101, K247, N249, T250, and A252.

Belongs to the SIP oxidoreductase family. FAD serves as cofactor.

Its function is as follows. Ferric-siderophore reductase involved in iron removal from the siderophores after their transport into the cell. Catalyzes the reduction of the ferric iron bound to the hydroxamate siderophores produced by Shewanella to ferrous iron. Can use a ferredoxin as electron donor. Despite the clear evidence for the interaction with NAD(P)H, no direct reduction of the enzyme by these compounds is observed, nor consumption of NAD(P)H, suggesting that NADH and NADPH are not the physiological electron donors. In Shewanella frigidimarina (strain NCIMB 400), this protein is Ferric siderophore reductase.